The following is an 83-amino-acid chain: Sec-independent protein translocase protein TatA (83 aa).

Residues 1-21 (MGSLSPWHWAILAVVVIVLFG) traverse the membrane as a helical segment. A disordered region spans residues 48-83 (NENKAEASIETPTPVQSQRVDPSAASGQDSTEARPA). The segment covering 57–77 (ETPTPVQSQRVDPSAASGQDS) has biased composition (polar residues).

It belongs to the TatA/E family. The Tat system comprises two distinct complexes: a TatABC complex, containing multiple copies of TatA, TatB and TatC subunits, and a separate TatA complex, containing only TatA subunits. Substrates initially bind to the TatABC complex, which probably triggers association of the separate TatA complex to form the active translocon.

The protein resides in the cell membrane. In terms of biological role, part of the twin-arginine translocation (Tat) system that transports large folded proteins containing a characteristic twin-arginine motif in their signal peptide across membranes. TatA could form the protein-conducting channel of the Tat system. The protein is Sec-independent protein translocase protein TatA of Mycobacterium bovis (strain BCG / Pasteur 1173P2).